The chain runs to 1423 residues: Histone-lysine N-methyltransferase ATXR7 (1423 aa).

The GYF domain occupies 263–312 (HACWFLVDGEGRNHGPHSILELFSWQQHGYVSDAALIRDGENKLRPITLA). 3 disordered regions span residues 923–960 (CKDH…EGTK), 1057–1097 (CSIS…SSTD), and 1115–1158 (LPCH…GRPK). The span at 936–949 (QKVKKAHTSKLKRK) shows a compositional bias: basic residues. Residues 950 to 959 (NLSDARDEGT) show a composition bias toward basic and acidic residues. The span at 1057 to 1071 (CSISQKGRKSSQSSI) shows a compositional bias: polar residues. 2 stretches are compositionally biased toward basic and acidic residues: residues 1115–1124 (LPCHTSDKLQ) and 1140–1157 (HTTE…DGRP). Residues 1266–1383 (KHLRFQQSKI…AGEEISYNYK (118 aa)) enclose the SET domain. Residue Y1382 participates in S-adenosyl-L-methionine binding.

Belongs to the class V-like SAM-binding methyltransferase superfamily. Histone-lysine methyltransferase family. TRX/MLL subfamily. Expressed in the shoot and root apices, vascular tissues and mesophyll cells of rosette leaves.

The protein localises to the nucleus. The enzyme catalyses L-lysyl(4)-[histone H3] + 3 S-adenosyl-L-methionine = N(6),N(6),N(6)-trimethyl-L-lysyl(4)-[histone H3] + 3 S-adenosyl-L-homocysteine + 3 H(+). It catalyses the reaction L-lysyl(36)-[histone H3] + 2 S-adenosyl-L-methionine = N(6),N(6)-dimethyl-L-lysyl(36)-[histone H3] + 2 S-adenosyl-L-homocysteine + 2 H(+). In terms of biological role, histone methyltransferase involved in regulation of flowering time. Required for the expression of the flowering repressors FLC and MADS-box genes of the MAF family. Required for histone H3 dimethylation on 'Lys-36' H3K36me2 at the FLC locus. Required for histone H3 trimethylation on 'Lys-4' (H3K4me3) at the FLC locus. Prevents trimethylation on 'Lys-27' (H3K27me3) at the same locus. Involved in the control of seed dormancy and germination. This is Histone-lysine N-methyltransferase ATXR7 from Arabidopsis thaliana (Mouse-ear cress).